The chain runs to 260 residues: Flap endonuclease Xni (260 aa).

A Mg(2+)-binding site is contributed by Asp104. A 5'-3' exonuclease domain is found at Val160–Pro250. The K(+) site is built by Leu171, Ala172, Pro180, Val182, and Ile185. An interaction with DNA region spans residues Gly184–Ser189.

Belongs to the Xni family. It depends on Mg(2+) as a cofactor. K(+) is required as a cofactor.

Has flap endonuclease activity. During DNA replication, flap endonucleases cleave the 5'-overhanging flap structure that is generated by displacement synthesis when DNA polymerase encounters the 5'-end of a downstream Okazaki fragment. This Pectobacterium atrosepticum (strain SCRI 1043 / ATCC BAA-672) (Erwinia carotovora subsp. atroseptica) protein is Flap endonuclease Xni.